The sequence spans 314 residues: Ferrochelatase (314 aa).

The Fe cation site is built by His-184 and Glu-259.

This sequence belongs to the ferrochelatase family.

It localises to the cytoplasm. The catalysed reaction is heme b + 2 H(+) = protoporphyrin IX + Fe(2+). It functions in the pathway porphyrin-containing compound metabolism; protoheme biosynthesis; protoheme from protoporphyrin-IX: step 1/1. Catalyzes the ferrous insertion into protoporphyrin IX. The protein is Ferrochelatase of Chlamydia trachomatis serovar A (strain ATCC VR-571B / DSM 19440 / HAR-13).